The primary structure comprises 411 residues: Metal-binding regulatory protein cuf1 (411 aa).

The segment at residues 1-40 (MVVINNVKMACMKCIRGHRSSTCKHNDRELFPIRPKGRPI) is a DNA-binding region (copper-fist). The Zn(2+) site is built by cysteine 11, cysteine 14, cysteine 23, and histidine 25. The tract at residues 63 to 92 (SRKKGSKCSTSSTTDLDSSSASNSSCSIPS) is disordered. Over residues 69–92 (KCSTSSTTDLDSSSASNSSCSIPS) the composition is skewed to low complexity.

The protein localises to the cytoplasm. It is found in the nucleus. Its function is as follows. Copper-sensing transcription factor that regulates iron uptake genes. Under copper starvation conditions activates the transcription of the copper transport genes, ctr4, ctr5 and ctr6. The sequence is that of Metal-binding regulatory protein cuf1 (cuf1) from Schizosaccharomyces pombe (strain 972 / ATCC 24843) (Fission yeast).